Consider the following 313-residue polypeptide: Jacalin-related lectin 8 (313 aa).

Positions 1–23 (MFIIYLFIFLSSAIIDSNGVAMA) are cleaved as a signal peptide. Jacalin-type lectin domains are found at residues 24 to 163 (QKIE…YVKT) and 165 to 309 (PTKS…YFSP).

It belongs to the jacalin lectin family.

The chain is Jacalin-related lectin 8 (JAL8) from Arabidopsis thaliana (Mouse-ear cress).